Consider the following 311-residue polypeptide: Malate dehydrogenase (311 aa).

Residues 7 to 13 (GAAGGIG) and D34 each bind NAD(+). Residues R81 and R87 each contribute to the substrate site. NAD(+)-binding positions include N94 and 117-119 (ITN). Substrate-binding residues include N119 and R153. The active-site Proton acceptor is H177. M227 serves as a coordination point for NAD(+).

The protein belongs to the LDH/MDH superfamily. MDH type 1 family. As to quaternary structure, homodimer.

It carries out the reaction (S)-malate + NAD(+) = oxaloacetate + NADH + H(+). Functionally, catalyzes the reversible oxidation of malate to oxaloacetate. The protein is Malate dehydrogenase of Pseudoalteromonas atlantica (strain T6c / ATCC BAA-1087).